The following is a 434-amino-acid chain: MLLDLNVESPERSGTSSSSVLNSGDAGGGGGGGGGGGLFRFDLLASSPDDDECSGEQHQLPAASGIVTRQLLPPPPPAAPSPAPAWQPPRRAAEDAALAQRPVVAKKTRRGPRSRSSQYRGVTFYRRTGRWESHIWDCGKQVYLGGFDTAHAAARAYDRAAIKFRGLEADINFNLSDYEDDLKQMRNWTKEEFVHILRRQSTGFARGSSKFRGVTLHKCGRWEARMGQLLGKKYIYLGLFDTEVEAARAYDRAAIRFNGREAVTNFEPASYNVDALPDAGNEAIVDGDLDLDLRISQPNARDSKSDVATTGLQLTCDSPESSNITVHQPMGSSPQWTVHHQSTPLPPQHQRLYPSHCLGFLPNLQERPMDRRPELGPMPFPTQAWQMQAPSHLPLLHAAASSGFSAGAGAGVAAATRRQPPFPADHPFYFPPTA.

A disordered region spans residues methionine 1–serine 116. Low complexity predominate over residues arginine 12–serine 23. The segment covering aspartate 25–leucine 38 has biased composition (gly residues). Over residues leucine 72–glutamine 87 the composition is skewed to pro residues. A compositionally biased stretch (basic residues) spans valine 104–arginine 113. Positions lysine 106–arginine 115 match the Nuclear localization signal motif. 2 consecutive DNA-binding regions (AP2/ERF) follow at residues glutamine 118–asparagine 174 and lysine 210–glutamate 267. The EAR motif lies at leucine 291–isoleucine 295.

The protein belongs to the AP2/ERF transcription factor family. AP2 subfamily. In terms of assembly, may form homodimer. Interacts with TPR2/ASP1. Highly expressed in developing panicles and in young seedlings. Present at low levels at all developmental stages.

Its subcellular location is the nucleus. In terms of biological role, probable transcription factor. Involved in spikelet transition. Together with SNB, controls synergistically inflorescence architecture and floral meristem establishment via the regulation of spatio-temporal expression of B- and E-function floral organ identity genes in the lodicules and of spikelet meristem genes. Prevents lemma and palea elongation as well as grain growth. This Oryza sativa subsp. japonica (Rice) protein is APETALA2-like protein 2.